We begin with the raw amino-acid sequence, 579 residues long: MSILNEPQGAAAAEDSYENELPVRRKQPGNVVVKWLTTTDHKTIGTLYLVTSFAFFCIGGVMALLMRAELARPGMQIMSSEQFNQAFTMHGTIMLLMFATPLFAGFANWIMPLQIGAPDVAFPRLNMFAYWLYLFGSLIAVGGFLTPQGAADFGWFAYSPLSDAVRSPGIGADMWIMGLAFSGFGTILGSVNFITTIICMRAPGMTMFRMPIFVWNVLLTGVLVLLAFPVLAAALFALEADRKFGAHVFDAANGGALLWQHLFWFFGHPEVYIIALPFFGIISEVIPVFSRKPMFGYMGLIGATIAIAGLSVTVWAHHMYVTGGVLLPFFSFMTFLIAVPTGVKFFNWIGTMWKGSLSFETPMLWATGFLITFTFGGLTGVILASPPMDFHVSDSYFVVAHFHYVVFGTVVFAMFSGFHYWWPKFTGKMLDERLGKITFWTLFVGFHGTFLIQHWLGAEGMPRRYADYLAADGFTALNTISTICSFLLGLSILPFLYNVWKTAKYGKPVGVDDPWGYGRSLEWATSCPPPRHNFLTLPRIRSESPAFDLHHPEIAALDQLENAGHGEKAAVAGGKEAGK.

The segment at 1 to 21 (MSILNEPQGAAAAEDSYENEL) is disordered. The helical transmembrane segment at 44 to 64 (IGTLYLVTSFAFFCIGGVMAL) threads the bilayer. His-90 contributes to the Fe(II)-heme a binding site. 6 consecutive transmembrane segments (helical) span residues 93–113 (IMLLMFATPLFAGFANWIMPL), 125–145 (LNMFAYWLYLFGSLIAVGGFL), 174–194 (MWIMGLAFSGFGTILGSVNFI), 217–237 (VLLTGVLVLLAFPVLAAALFA), 262–282 (LFWFFGHPEVYIIALPFFGII), and 295–315 (FGYMGLIGATIAIAGLSVTVW). His-268 and Tyr-272 together coordinate Cu cation. The segment at residues 268 to 272 (HPEVY) is a cross-link (1'-histidyl-3'-tyrosine (His-Tyr)). Positions 317 and 318 each coordinate Cu cation. Helical transmembrane passes span 319-339 (MYVTGGVLLPFFSFMTFLIAV), 363-383 (MLWATGFLITFTFGGLTGVIL), 397-417 (FVVAHFHYVVFGTVVFAMFSG), 437-457 (ITFWTLFVGFHGTFLIQHWLG), and 480-500 (ISTICSFLLGLSILPFLYNVW). His-401 serves as a coordination point for heme a3. His-403 contacts Fe(II)-heme a.

The protein belongs to the heme-copper respiratory oxidase family. In terms of assembly, associates with subunits II, III and IV to form cytochrome c oxidase. The cofactor is Cu(2+). It depends on heme as a cofactor.

Its subcellular location is the cell membrane. It carries out the reaction 4 Fe(II)-[cytochrome c] + O2 + 8 H(+)(in) = 4 Fe(III)-[cytochrome c] + 2 H2O + 4 H(+)(out). The protein operates within energy metabolism; oxidative phosphorylation. Cytochrome c oxidase is the component of the respiratory chain that catalyzes the reduction of oxygen to water. Subunits 1-3 form the functional core of the enzyme complex. CO I is the catalytic subunit of the enzyme. Electrons originating in cytochrome c are transferred via the copper A center of subunit 2 and heme A of subunit 1 to the bimetallic center formed by heme A3 and copper B. This chain is Probable cytochrome c oxidase subunit 1-alpha (ctaD1), found in Streptomyces avermitilis (strain ATCC 31267 / DSM 46492 / JCM 5070 / NBRC 14893 / NCIMB 12804 / NRRL 8165 / MA-4680).